Here is a 174-residue protein sequence, read N- to C-terminus: Endoribonuclease YbeY (174 aa).

Residues histidine 129, histidine 133, and histidine 139 each coordinate Zn(2+).

This sequence belongs to the endoribonuclease YbeY family. Zn(2+) serves as cofactor.

Its subcellular location is the cytoplasm. In terms of biological role, single strand-specific metallo-endoribonuclease involved in late-stage 70S ribosome quality control and in maturation of the 3' terminus of the 16S rRNA. This Lactobacillus acidophilus (strain ATCC 700396 / NCK56 / N2 / NCFM) protein is Endoribonuclease YbeY.